Here is a 364-residue protein sequence, read N- to C-terminus: Peptide chain release factor 1 (364 aa).

Residue glutamine 237 is modified to N5-methylglutamine.

The protein belongs to the prokaryotic/mitochondrial release factor family. Post-translationally, methylated by PrmC. Methylation increases the termination efficiency of RF1.

Its subcellular location is the cytoplasm. In terms of biological role, peptide chain release factor 1 directs the termination of translation in response to the peptide chain termination codons UAG and UAA. This Rubrobacter xylanophilus (strain DSM 9941 / JCM 11954 / NBRC 16129 / PRD-1) protein is Peptide chain release factor 1.